The primary structure comprises 179 residues: MTRLEKFYQEKVVPALQKEFLYKSIMQVPTIEKISLNIGLGVASQSNKIMEEAISELSLIAGQKAVITRAKKSIASFKLREGMPIGCRVTLRKERMWDFLDKLMNFALPRVRDFRGVSENGFDGHGNFTLGIKEHSIFPELEIDRIENTKGMNITIVTSAVLDSEGKVLLDLLGMPFKK.

The protein belongs to the universal ribosomal protein uL5 family. In terms of assembly, part of the 50S ribosomal subunit; part of the 5S rRNA/L5/L18/L25 subcomplex. Contacts the 5S rRNA and the P site tRNA. Forms a bridge to the 30S subunit in the 70S ribosome.

In terms of biological role, this is one of the proteins that bind and probably mediate the attachment of the 5S RNA into the large ribosomal subunit, where it forms part of the central protuberance. In the 70S ribosome it contacts protein S13 of the 30S subunit (bridge B1b), connecting the 2 subunits; this bridge is implicated in subunit movement. Contacts the P site tRNA; the 5S rRNA and some of its associated proteins might help stabilize positioning of ribosome-bound tRNAs. The polypeptide is Large ribosomal subunit protein uL5 (Lawsonia intracellularis (strain PHE/MN1-00)).